A 92-amino-acid polypeptide reads, in one-letter code: Endoribonuclease HigB (92 aa).

Histidine 92 is a catalytic residue.

As to quaternary structure, forms a complex with the antitoxin HigA which inhibits the mRNA interferase activity. The heterodimer dimerizes to form a HigB-(HigA)2-HigB tetramer that is able to bind to the DNA.

In terms of biological role, toxic component of a type II toxin-antitoxin (TA) system. A ribosome-associated translation-dependent mRNA interferase. Inhibits translation by sequence-specific cleavage of mRNA. Prefers either in-frame or out-of-frame 5'-AAA-3' codons (lysine). Also cleaves the first three AAAs of stretches of four or more A sequences. 20% of codons containing AA are cleaved and occassionally cuts even at a single A. In Proteus vulgaris, this protein is Endoribonuclease HigB.